Consider the following 344-residue polypeptide: UDP-glucose 4-epimerase (344 aa).

Residues 15–17 (GYI), 36–40 (DNLSN), 63–64 (DI), Phe-85, and Lys-89 contribute to the NAD(+) site. A substrate-binding site is contributed by 129–131 (SAT). Residue Tyr-153 is the Proton acceptor of the active site. 2 residues coordinate NAD(+): Lys-157 and Tyr-181. Substrate contacts are provided by residues 181–183 (YFN), 202–204 (NNL), 220–222 (SIF), Arg-235, and 297–300 (RKGD).

Belongs to the NAD(P)-dependent epimerase/dehydratase family. In terms of assembly, homodimer. The cofactor is NAD(+).

The catalysed reaction is UDP-alpha-D-glucose = UDP-alpha-D-galactose. It catalyses the reaction UDP-N-acetyl-alpha-D-glucosamine = UDP-N-acetyl-alpha-D-galactosamine. Its pathway is carbohydrate metabolism; galactose metabolism. Functionally, catalyzes two distinct but analogous reactions: the reversible epimerization of UDP-glucose to UDP-galactose and the reversible epimerization of UDP-N-acetylglucosamine to UDP-N-acetylgalactosamine. The reaction with UDP-Gal plays a critical role in the Leloir pathway of galactose catabolism in which galactose is converted to the glycolytic intermediate glucose 6-phosphate. It contributes to the catabolism of dietary galactose and enables the endogenous biosynthesis of both UDP-Gal and UDP-GalNAc when exogenous sources are limited. Both UDP-sugar interconversions are important in the synthesis of glycoproteins and glycolipids. The polypeptide is UDP-glucose 4-epimerase (galE) (Dictyostelium discoideum (Social amoeba)).